A 295-amino-acid chain; its full sequence is MSGALDVLQMKEEDVLKFLAAGTHLGGTNLDFQMEQYIYKRKSDGIYIINLKRTWEKLLLAARAIVAIENPADVSVISSRNTGQRAVLKFAAATGATPIAGRFTPGTFTNQIQAAFREPRLLVVTDPRADHQPLTEASYVNLPTIALCNTDSPLRYVDIAIPCNNKGAHSVGLMWWMLAREVLRMRGTISREHPWEVMPDLYFYRDPEEIEKEEQAAAEKAVTKEEFQGEWTAPAPEFTATQPEVADWSEGVQVPSVPIQQFPTEDWSAQPTTEDWSAAPTAQATEWVGTTTEWS.

S2 bears the N-acetylserine mark. S43 is subject to Phosphoserine. Residue K52 is modified to N6-acetyllysine. An interaction with PPP1R16B region spans residues T54–Q113. Position 89 is an N6-acetyllysine; alternate (K89). K89 is covalently cross-linked (Glycyl lysine isopeptide (Lys-Gly) (interchain with G-Cter in SUMO2); alternate). T97 carries the phosphothreonine modification. Laminin-binding stretches follow at residues I161–R180 and R205–G229. [DE]-W-[ST] repeat units lie at residues E230 to T232, D247 to S249, D266 to S268, D275 to S277, and E293 to S295. The laminin-binding stretch occupies residues Q242–S295. Residues D266 to S295 form a disordered region.

Belongs to the universal ribosomal protein uS2 family. As to quaternary structure, monomer (37LRP) and homodimer (67LR). Component of the small ribosomal subunit. Mature ribosomes consist of a small (40S) and a large (60S) subunit. The 40S subunit contains about 33 different proteins and 1 molecule of RNA (18S). The 60S subunit contains about 49 different proteins and 3 molecules of RNA (28S, 5.8S and 5S). Interacts with RPS21. Interacts with several laminins including at least LAMB1. Interacts with MDK. The mature dimeric form interacts with PPP1R16B (via its fourth ankyrin repeat). Interacts with PPP1CA only in the presence of PPP1R16B. Acylated. Acylation may be a prerequisite for conversion of the monomeric 37 kDa laminin receptor precursor (37LRP) to the mature dimeric 67 kDa laminin receptor (67LR), and may provide a mechanism for membrane association. Post-translationally, cleaved by stromelysin-3 (ST3) at the cell surface. Cleavage by stromelysin-3 may be a mechanism to alter cell-extracellular matrix interactions.

The protein resides in the cell membrane. Its subcellular location is the cytoplasm. It is found in the nucleus. Its function is as follows. Required for the assembly and/or stability of the 40S ribosomal subunit. Required for the processing of the 20S rRNA-precursor to mature 18S rRNA in a late step of the maturation of 40S ribosomal subunits. Also functions as a cell surface receptor for laminin. Plays a role in cell adhesion to the basement membrane and in the consequent activation of signaling transduction pathways. May play a role in cell fate determination and tissue morphogenesis. Also acts as a receptor for several other ligands, including the pathogenic prion protein, viruses, and bacteria. Acts as a PPP1R16B-dependent substrate of PPP1CA. The protein is Small ribosomal subunit protein uS2 of Sus scrofa (Pig).